The primary structure comprises 149 residues: UPF0260 protein PSPPH_1551 (149 aa).

This sequence belongs to the UPF0260 family.

The chain is UPF0260 protein PSPPH_1551 from Pseudomonas savastanoi pv. phaseolicola (strain 1448A / Race 6) (Pseudomonas syringae pv. phaseolicola (strain 1448A / Race 6)).